We begin with the raw amino-acid sequence, 609 residues long: Elongation factor 4 (609 aa).

The 183-residue stretch at 11 to 193 (ERIRNFSIIA…QIVEKIPAPS (183 aa)) folds into the tr-type G domain. GTP contacts are provided by residues 23–28 (DHGKST) and 140–143 (NKID).

Belongs to the TRAFAC class translation factor GTPase superfamily. Classic translation factor GTPase family. LepA subfamily.

It is found in the cell membrane. The catalysed reaction is GTP + H2O = GDP + phosphate + H(+). Required for accurate and efficient protein synthesis under certain stress conditions. May act as a fidelity factor of the translation reaction, by catalyzing a one-codon backward translocation of tRNAs on improperly translocated ribosomes. Back-translocation proceeds from a post-translocation (POST) complex to a pre-translocation (PRE) complex, thus giving elongation factor G a second chance to translocate the tRNAs correctly. Binds to ribosomes in a GTP-dependent manner. This is Elongation factor 4 from Geobacillus thermodenitrificans (strain NG80-2).